Consider the following 89-residue polypeptide: MDMVLAKTVVLAASAVGAGAAMIAGIGPGVGQGYAAGKAVESVARQPEAKGDIISTMVLGQAIAESTGIYSLVIALILLYANPFVGLLG.

The next 2 membrane-spanning stretches (helical) occupy residues 9 to 29 (VVLAASAVGAGAAMIAGIGPG) and 68 to 88 (GIYSLVIALILLYANPFVGLL).

The protein belongs to the ATPase C chain family. In terms of assembly, F-type ATPases have 2 components, F(1) - the catalytic core - and F(0) - the membrane sodium channel. F(1) has five subunits: alpha(3), beta(3), gamma(1), delta(1), epsilon(1). F(0) has three main subunits: a(1), b(2) and c(10-14). The alpha and beta chains form an alternating ring which encloses part of the gamma chain. F(1) is attached to F(0) by a central stalk formed by the gamma and epsilon chains, while a peripheral stalk is formed by the delta and b chains.

It is found in the cell membrane. Its function is as follows. F(1)F(0) ATP synthase produces ATP from ADP in the presence of a proton or sodium gradient. F-type ATPases consist of two structural domains, F(1) containing the extramembraneous catalytic core and F(0) containing the membrane sodium channel, linked together by a central stalk and a peripheral stalk. During catalysis, ATP synthesis in the catalytic domain of F(1) is coupled via a rotary mechanism of the central stalk subunits to sodium translocation. In terms of biological role, key component of the F(0) channel; it plays a direct role in translocation across the membrane. A homomeric c-ring of between 10-14 subunits forms the central stalk rotor element with the F(1) delta and epsilon subunits. This is ATP synthase subunit c, sodium ion specific (atpE) from Propionigenium modestum.